Reading from the N-terminus, the 134-residue chain is uncharacterized protein (134 aa).

The segment at 1-30 is disordered; that stretch reads MGTLQGAALRSRERPSWPQETHGHRERTEE. The segment covering 10–30 has biased composition (basic and acidic residues); sequence RSRERPSWPQETHGHRERTEE.

This is an uncharacterized protein from Homo sapiens (Human).